We begin with the raw amino-acid sequence, 353 residues long: ATP-dependent kinase YFH7 (353 aa).

31-39 (GSPGSGKST) is a binding site for ATP.

This sequence belongs to the YFH7 family.

ATP-dependent kinase that could be involved in endoplasmic reticulum membrane assembly. This is ATP-dependent kinase YFH7 (YFH7) from Saccharomyces cerevisiae (strain ATCC 204508 / S288c) (Baker's yeast).